We begin with the raw amino-acid sequence, 178 residues long: Large ribosomal subunit protein uL6 (178 aa).

It belongs to the universal ribosomal protein uL6 family. Part of the 50S ribosomal subunit.

In terms of biological role, this protein binds to the 23S rRNA, and is important in its secondary structure. It is located near the subunit interface in the base of the L7/L12 stalk, and near the tRNA binding site of the peptidyltransferase center. In Streptococcus agalactiae serotype V (strain ATCC BAA-611 / 2603 V/R), this protein is Large ribosomal subunit protein uL6.